The primary structure comprises 114 residues: Small ribosomal subunit protein bS16 (114 aa).

The disordered stretch occupies residues 87–114; it reads AFREQPVQSAPKKKAQERAAERAKAAEA. Basic and acidic residues predominate over residues 100–114; sequence KAQERAAERAKAAEA.

The protein belongs to the bacterial ribosomal protein bS16 family.

The chain is Small ribosomal subunit protein bS16 from Acidiphilium cryptum (strain JF-5).